The sequence spans 259 residues: Phosphonates import ATP-binding protein PhnC (259 aa).

The ABC transporter domain maps to 4-245 (ISIQSVTKRF…ALRTIYQREG (242 aa)). 37 to 44 (GPSGAGKS) contributes to the ATP binding site.

This sequence belongs to the ABC transporter superfamily. Phosphonates importer (TC 3.A.1.9.1) family. The complex is composed of two ATP-binding proteins (PhnC), two transmembrane proteins (PhnE) and a solute-binding protein (PhnD).

The protein localises to the cell inner membrane. It carries out the reaction phosphonate(out) + ATP + H2O = phosphonate(in) + ADP + phosphate + H(+). Its function is as follows. Part of the ABC transporter complex PhnCDE involved in phosphonates import. Responsible for energy coupling to the transport system. The polypeptide is Phosphonates import ATP-binding protein PhnC (Thiobacillus denitrificans (strain ATCC 25259 / T1)).